Reading from the N-terminus, the 428-residue chain is Serine--tRNA ligase (428 aa).

235–237 lines the L-serine pocket; that stretch reads TAE. 266–268 contributes to the ATP binding site; sequence RSE. Glu289 is a binding site for L-serine. 353-356 contacts ATP; that stretch reads EISS. Ser389 is an L-serine binding site.

The protein belongs to the class-II aminoacyl-tRNA synthetase family. Type-1 seryl-tRNA synthetase subfamily. As to quaternary structure, homodimer. The tRNA molecule binds across the dimer.

Its subcellular location is the cytoplasm. The catalysed reaction is tRNA(Ser) + L-serine + ATP = L-seryl-tRNA(Ser) + AMP + diphosphate + H(+). The enzyme catalyses tRNA(Sec) + L-serine + ATP = L-seryl-tRNA(Sec) + AMP + diphosphate + H(+). It functions in the pathway aminoacyl-tRNA biosynthesis; selenocysteinyl-tRNA(Sec) biosynthesis; L-seryl-tRNA(Sec) from L-serine and tRNA(Sec): step 1/1. Functionally, catalyzes the attachment of serine to tRNA(Ser). Is also able to aminoacylate tRNA(Sec) with serine, to form the misacylated tRNA L-seryl-tRNA(Sec), which will be further converted into selenocysteinyl-tRNA(Sec). The polypeptide is Serine--tRNA ligase (Psychromonas ingrahamii (strain DSM 17664 / CCUG 51855 / 37)).